The primary structure comprises 339 residues: MAQYKGAASEAGRAMHLMKKREKQREQMEQMKQRIAEENIMKSNIDKKFSAHYDAVEAELKSSTVGLVTLNDMKAKQEALVKEREKQLAKKEQSKELQMKLEKLREKERKKEAKRKISSLSFTLEEEEEGGEEEEEAAMYEEEMEREEITTKKRKLGKNPDVDTSFLPDRDREEEENRLREELRQEWEAKQEKIKSEEIEITFSYWDGSGHRRTVKMRKGNTMQQFLQKALEILRKDFSELRSAGVEQLMYIKEDLIIPHHHSFYDFIVTKARGKSGPLFNFDVHDDVRLLSDATVEKDESHAGKVVLRSWYEKNKHIFPASRWEPYDPEKKWDKYTIR.

The interval 1–31 (MAQYKGAASEAGRAMHLMKKREKQREQMEQM) is disordered. Residue Ala-2 is modified to N-acetylalanine. A Glycyl lysine isopeptide (Lys-Gly) (interchain with G-Cter in SUMO2) cross-link involves residue Lys-100. Residues 121–177 (SFTLEEEEEGGEEEEEAAMYEEEMEREEITTKKRKLGKNPDVDTSFLPDRDREEEEN) form a disordered region. The segment covering 124-146 (LEEEEEGGEEEEEAAMYEEEMER) has biased composition (acidic residues). The short motif at 152-155 (KKRK) is the Nuclear localization signal element. Over residues 168 to 177 (PDRDREEEEN) the composition is skewed to basic and acidic residues.

This sequence belongs to the FAM50 family. As to quaternary structure, interacts with EFTUD2, a component of the spliceosome U5 complex. Interacts with DDX41, a component of the spliceosome C complex. In terms of tissue distribution, widely expressed in fetal and adult tissues. Mostly abundant in fetal brain, liver and kidney; in the adult, high levels were also observed in heart, skeletal muscle, spleen, thymus, prostate and small intestine. Expressed in fetal cerebellum and hypothalamus. Low expression is observed in fetal temporal lobe.

The protein resides in the nucleus. In terms of biological role, probably involved in the regulation of pre-mRNA splicing. In Homo sapiens (Human), this protein is Protein FAM50A (FAM50A).